Here is a 239-residue protein sequence, read N- to C-terminus: 1-(5-phosphoribosyl)-5-[(5-phosphoribosylamino)methylideneamino] imidazole-4-carboxamide isomerase (239 aa).

Asp-8 (proton acceptor) is an active-site residue. Catalysis depends on Asp-129, which acts as the Proton donor.

The protein belongs to the HisA/HisF family.

The protein localises to the cytoplasm. The enzyme catalyses 1-(5-phospho-beta-D-ribosyl)-5-[(5-phospho-beta-D-ribosylamino)methylideneamino]imidazole-4-carboxamide = 5-[(5-phospho-1-deoxy-D-ribulos-1-ylimino)methylamino]-1-(5-phospho-beta-D-ribosyl)imidazole-4-carboxamide. Its pathway is amino-acid biosynthesis; L-histidine biosynthesis; L-histidine from 5-phospho-alpha-D-ribose 1-diphosphate: step 4/9. The protein is 1-(5-phosphoribosyl)-5-[(5-phosphoribosylamino)methylideneamino] imidazole-4-carboxamide isomerase of Paramagnetospirillum magneticum (strain ATCC 700264 / AMB-1) (Magnetospirillum magneticum).